The following is a 159-amino-acid chain: Large ribosomal subunit protein uL10 (159 aa).

It belongs to the universal ribosomal protein uL10 family. As to quaternary structure, part of the ribosomal stalk of the 50S ribosomal subunit. The N-terminus interacts with L11 and the large rRNA to form the base of the stalk. The C-terminus forms an elongated spine to which L12 dimers bind in a sequential fashion forming a multimeric L10(L12)X complex.

Forms part of the ribosomal stalk, playing a central role in the interaction of the ribosome with GTP-bound translation factors. The protein is Large ribosomal subunit protein uL10 of Campylobacter jejuni (strain RM1221).